Consider the following 147-residue polypeptide: Ribosome maturation factor RimP (147 aa).

It belongs to the RimP family.

The protein localises to the cytoplasm. Functionally, required for maturation of 30S ribosomal subunits. The sequence is that of Ribosome maturation factor RimP from Legionella pneumophila (strain Lens).